Here is a 7119-residue protein sequence, read N- to C-terminus: Replicase polyprotein 1ab (7119 aa).

The CoV Nsp1 globular domain occupies 25 to 151 (RSDHVACTVP…EYTFLLRKNG (127 aa)). The 29-residue stretch at 167–195 (TPYVEILDDLEADPTGKYSQNLLKKLIGG) folds into the BetaCoV Nsp1 C-terminal domain. The CoV Nsp2 N-terminal domain occupies 197 to 472 (CIPIDQYMCG…WDKVVETANL (276 aa)). Cys339, Cys342, Cys358, and Cys360 together coordinate Zn(2+). The tract at residues 339–360 (CNACGRGTWCTGNAIQGFACDC) is C4. Positions 478–712 (QRSLNFCQQF…LDIMSKAMKL (235 aa)) constitute a CoV Nsp2 middle domain. Residues 714–847 (HTNVSWAGTK…VSTLFRLKGG (134 aa)) enclose the CoV Nsp2 C-terminal domain. Residues 851-960 (KKVTFGDVNT…MTFSINPVED (110 aa)) enclose the Ubiquitin-like 1 domain. 2 consecutive Macro domains span residues 1152–1321 (DLSK…KPDG) and 1322–1446 (LVYS…AIQT). Positions 1446–1519 (TPETAFINNV…LEACRAYLTS (74 aa)) constitute a DPUP domain. Residues 1524 to 1579 (QVNIEVLVTIDGVNFRTVILNDTTTFRKQLGATFYKGVDISDAFPTVKMGGESLFV) enclose the Ubiquitin-like 2 domain. The Peptidase C16 domain maps to 1593–1864 (EYYGTSDVTF…KVEVNPDLSN (272 aa)). Cys1634 serves as the catalytic For PL-PRO activity. Zn(2+) is bound by residues Cys1714, Cys1717, Cys1749, and Cys1751. The C4-type zinc-finger motif lies at 1714 to 1751 (CTVCGIRDIEYTGMRACVYAGVNSMEELQSVFNETCVC). Active-site for PL-PRO activity residues include His1800 and Asp1815. Residues 1878–1995 (TIKYSPATIL…QLYDVAPIVL (118 aa)) form the Nucleic acid-binding domain. The G2M domain occupies 2012–2133 (HNVPVVDDVP…AKITVTATTA (122 aa)). 3 helical membrane-spanning segments follow: residues 2112-2132 (VLLG…TATT), 2145-2165 (FVVN…LFFL), and 2222-2242 (LFLL…LVLF). The segment at 2112–2395 (VLLGASSLFA…VTHIPLHGLV (284 aa)) is HD1. Residues 2259-2325 (LAIYKEVRSY…LQMLQTHITS (67 aa)) form the 3Ecto domain. 2 disulfides stabilise this stretch: Cys2275-Cys2303 and Cys2293-Cys2300. The next 3 helical transmembrane spans lie at 2326–2346 (YVLN…YVLY), 2350–2370 (FNVL…SAFV), and 2375–2395 (YNYI…HGLV). Residues 2409-2499 (KFYSHVINGC…TLRRLIKPTD (91 aa)) are Y1. The CoV Nsp3 Y domain maps to 2409 to 2782 (KFYSHVINGC…LSVKFSATKI (374 aa)). Zn(2+) contacts are provided by His2413, Cys2418, Cys2423, Cys2426, Cys2459, His2462, Cys2466, and Cys2469. Residues 2413-2426 (HVINGCKDTACLLC) form a ZF1 region. The interval 2459-2469 (CCKHNWNCVEC) is ZF2. The interval 2500–2598 (QSHYYVDSVV…LVDVNLVTTV (99 aa)) is Y2. Residues 2500–2782 (QSHYYVDSVV…LSVKFSATKI (283 aa)) form a coV-Y region. The interval 2599-2681 (GDSREIAIKM…DALQYAHKND (83 aa)) is Y3. The interval 2682 to 2782 (IQLTTECYNN…LSVKFSATKI (101 aa)) is Y4. Transmembrane regions (helical) follow at residues 2800–2820 (GYCI…FCLP), 3072–3092 (STSL…FYYI), 3105–3125 (CAVV…FIVA), and 3149–3169 (AFIM…IWML). Residues 2800-3169 (GYCILTLFVF…FGAVVPIWML (370 aa)) form an HD2 region. Residues 3195–3291 (VFTDGKLNCS…NCSVTSSVLQ (97 aa)) enclose the Nsp4C domain. Residues 3292–3597 (SGLVKMSAPS…NMQVMGVVMQ (306 aa)) enclose the Peptidase C30 domain. Active-site for 3CL-PRO activity residues include His3332 and Cys3439. Helical transmembrane passes span 3603-3623 (ISYG…VSVM), 3637-3657 (TIPT…MFTV), 3662-3682 (TFMS…NIVY), 3707-3727 (RTTH…AIIV), 3735-3755 (MSNL…YVIG), 3784-3804 (LAKF…FILP), and 3808-3828 (LVLL…GVFS). The HD3 stretch occupies residues 3603–3828 (ISYGFIHWLI…MCTMYFGVFS (226 aa)). The 83-residue stretch at 3890–3972 (SKLTDLKCTS…DLFENSSVLQ (83 aa)) folds into the RdRp Nsp7 cofactor domain. The RdRp Nsp8 cofactor domain maps to 3973–4171 (ATLTEFSHLA…RSSSSAVKLQ (199 aa)). A Nsp9 ssRNA-binding domain is found at 4172-4281 (NNEIHPKGLK…GHIAATVRLQ (110 aa)). Positions 4282 to 4420 (AGANTEFASN…DALRNNTVPQ (139 aa)) constitute an ExoN/MTase coactivator domain. The Zn(2+) site is built by Cys4355, Cys4358, His4364, Cys4371, Cys4397, Cys4400, Cys4408, and Cys4410. 2 zinc fingers span residues 4355-4371 (CLYC…SGVC) and 4397-4410 (CNVC…GCNC). The region spanning 4426–4683 (FLNRVRGSSV…AAETHKDCDF (258 aa)) is the NiRAN domain. 2 residues coordinate Mn(2+): Asn4631 and Asp4640. Residues 4688-4786 (IEWPLLEYDY…MNMDFNIHRH (99 aa)) form the Nsp12 Interface domain. Zn(2+) contacts are provided by His4717, Cys4723, Cys4728, Cys4732, and Cys4909. The 568-residue stretch at 4787-5354 (RLALKELMMY…DLYSSPTTLQ (568 aa)) folds into the Nsp12 RNA-dependent RNA polymerase domain. The interval 4789–5003 (ALKELMMYAA…HQKMLKSMAA (215 aa)) is rdRp Fingers N-ter. A rdRp Palm N-ter region spans residues 5004-5042 (TRGATCVIGTTKFYGGWDFMLKTLYKDVESPHLMGWDYP). In terms of domain architecture, RdRp catalytic spans 5034-5196 (PHLMGWDYPK…CYNSDYAAKG (163 aa)). Positions 5043-5101 (KCDRAMPNMCRILASLILARKHSTCCTNSDRFYRLANECAQVLSEYVLCGGGYYVKPGG) are rdRp Fingers C-ter. Residues His5064, Cys5067, and Cys5068 each coordinate Zn(2+). Residues 5102-5237 (TSSGDATTAY…EKGPHEFCSQ (136 aa)) are rdRp Palm C-ter. Active-site residues include Ser5181, Asp5182, and Asp5183. Residues 5238–5354 (HTLYIKDGDD…DLYSSPTTLQ (117 aa)) form a rdRp Thumb region. One can recognise a CV ZBD domain in the interval 5355–5467 (AVGSCVVCHS…MEFNRLATCD (113 aa)). 12 residues coordinate Zn(2+): Cys5359, Cys5362, Cys5370, Cys5373, Cys5380, Cys5383, His5387, His5393, Cys5404, Cys5409, Cys5426, and His5429. A (+)RNA virus helicase ATP-binding domain is found at 5611 to 5792 (TVPEEFANHV…MCNLGPDIFL (182 aa)). ATP is bound at residue 5636-5643 (GPPGTGKS). The region spanning 5793–5967 (SVCYRCPKEI…GLFKDCSRED (175 aa)) is the (+)RNA virus helicase C-terminal domain. The ExoN domain maps to 6024–6239 (LFITRDEAIR…RCLAIYDCFI (216 aa)). Residues Asp6042, Glu6044, and Glu6143 contribute to the active site. Zn(2+) is bound by residues Cys6159, Cys6162, Cys6178, His6181, His6209, Cys6213, and His6216. Residues His6220 and Asp6225 contribute to the active site. Cys6231 lines the Zn(2+) pocket. The region spanning 6248–6475 (YPYISHEQKL…NLWSTFVKVQ (228 aa)) is the N7-MTase domain. 6283 to 6289 (DIGNPKG) is a binding site for S-adenosyl-L-methionine. The gpppA-binding stretch occupies residues 6361-6375 (CNGGSLYVNKHAFHT). Zn(2+) is bound by residues Cys6399, Cys6421, Cys6432, and His6435. A Nsp15 N-terminal oligomerization domain is found at 6476-6536 (GLENIAFNVI…NVAFELYAKR (61 aa)). An AV-Nsp11N/CoV-Nsp15M domain is found at 6537–6658 (AVRSHPDLNL…LYKKVNNEFV (122 aa)). In terms of domain architecture, NendoU spans 6675–6814 (TVLTPMEEDF…RDGKVQTFYP (140 aa)). Catalysis depends on residues His6705, His6720, Lys6760, Lys6863, Asp6947, Lys6987, and Glu7020. A Nidovirus-type SAM-dependent 2'-O-MTase domain is found at 6819–7113 (TNDWKPGLTM…TLNVSTDVLV (295 aa)).

Belongs to the coronaviruses polyprotein 1ab family. As to quaternary structure, interacts with host PHB and PHB2. Interacts with papain-like protease nsp3 and non-structural protein 6. In terms of assembly, monomer. Homodimer. Only the homodimer shows catalytic activity. As to quaternary structure, interacts with nsp8 and nsp12 to form the replication-transcription complex (RTC): nsp12, nsp7, two subunits of nsp8, and up to two subunits of nsp13. Interacts with nsp7, nsp13 and nsp12 to form the replication-transcription complex (RTC): nsp12, nsp7, two subunits of nsp8, and up to two subunits of nsp13. In terms of assembly, interacts with nsp12. As to quaternary structure, interacts with proofreading exoribonuclease nsp14 and 2'-O-methyltransferase nsp16; these interactions enhance nsp14 and nsp16 enzymatic activities. Interacts with nsp7 and nsp8 to form the replication-transcription complex (RTC): nsp12, nsp7, two subunits of nsp8, and up to two subunits of nsp13. Interacts with nsp9. In terms of assembly, interacts with nsp8 to form the replication-transcription complex (RTC): nsp12, nsp7, two subunits of nsp8, and up to two subunits of nsp13. Mn(2+) is required as a cofactor. Requires Mg(2+) as cofactor. Post-translationally, specific enzymatic cleavages in vivo by its own proteases yield mature proteins. 3CL-PRO and PL-PRO proteinases are autocatalytically processed.

It is found in the host membrane. The protein resides in the host cytoplasm. Its subcellular location is the host perinuclear region. The protein localises to the host endoplasmic reticulum-Golgi intermediate compartment. It catalyses the reaction RNA(n) + a ribonucleoside 5'-triphosphate = RNA(n+1) + diphosphate. The catalysed reaction is ATP + H2O = ADP + phosphate + H(+). The enzyme catalyses Thiol-dependent hydrolysis of ester, thioester, amide, peptide and isopeptide bonds formed by the C-terminal Gly of ubiquitin (a 76-residue protein attached to proteins as an intracellular targeting signal).. It carries out the reaction a 5'-end (N(7)-methyl 5'-triphosphoguanosine)-ribonucleoside in mRNA + S-adenosyl-L-methionine = a 5'-end (N(7)-methyl 5'-triphosphoguanosine)-(2'-O-methyl-ribonucleoside) in mRNA + S-adenosyl-L-homocysteine + H(+). It catalyses the reaction uridylyl-uridylyl-ribonucleotide-RNA = a 3'-end uridylyl-2',3'-cyclophospho-uridine-RNA + a 5'-end dephospho-ribonucleoside-RNA. The catalysed reaction is a 5'-end diphospho-ribonucleoside in mRNA + GTP + H(+) = a 5'-end (5'-triphosphoguanosine)-ribonucleoside in mRNA + diphosphate. The enzyme catalyses a 5'-end (5'-triphosphoguanosine)-ribonucleoside in mRNA + S-adenosyl-L-methionine = a 5'-end (N(7)-methyl 5'-triphosphoguanosine)-ribonucleoside in mRNA + S-adenosyl-L-homocysteine. Its function is as follows. The replicase polyprotein of coronaviruses is a multifunctional protein: it contains the activities necessary for the transcription of negative stranded RNA, leader RNA, subgenomic mRNAs and progeny virion RNA as well as proteinases responsible for the cleavage of the polyprotein into functional products. Inhibits host translation by interacting with the 40S ribosomal subunit. The nsp1-40S ribosome complex further induces an endonucleolytic cleavage near the 5'UTR of host mRNAs, targeting them for degradation. Viral mRNAs are not susceptible to nsp1-mediated endonucleolytic RNA cleavage thanks to the presence of a 5'-end leader sequence and are therefore protected from degradation. By suppressing host gene expression, nsp1 facilitates efficient viral gene expression in infected cells and evasion from host immune response. Functionally, may play a role in the modulation of host cell survival signaling pathway by interacting with host PHB and PHB2. Indeed, these two proteins play a role in maintaining the functional integrity of the mitochondria and protecting cells from various stresses. In terms of biological role, responsible for the cleavages located at the N-terminus of the replicase polyprotein. In addition, PL-PRO possesses a deubiquitinating/deISGylating activity and processes both 'Lys-48'- and 'Lys-63'-linked polyubiquitin chains from cellular substrates. Participates together with nsp4 in the assembly of virally-induced cytoplasmic double-membrane vesicles necessary for viral replication. Antagonizes innate immune induction of type I interferon by blocking the phosphorylation, dimerization and subsequent nuclear translocation of host IRF3. Also prevents host NF-kappa-B signaling. Its function is as follows. Participates in the assembly of virally-induced cytoplasmic double-membrane vesicles necessary for viral replication. Cleaves the C-terminus of replicase polyprotein at 11 sites. Recognizes substrates containing the core sequence [ILMVF]-Q-|-[SGACN]. Also able to bind an ADP-ribose-1''-phosphate (ADRP). Functionally, plays a role in the initial induction of autophagosomes from host endoplasmic reticulum. Later, limits the expansion of these phagosomes that are no longer able to deliver viral components to lysosomes. In terms of biological role, forms a hexadecamer with nsp8 (8 subunits of each) that may participate in viral replication by acting as a primase. Alternatively, may synthesize substantially longer products than oligonucleotide primers. Its function is as follows. Forms a hexadecamer with nsp7 (8 subunits of each) that may participate in viral replication by acting as a primase. Alternatively, may synthesize substantially longer products than oligonucleotide primers. Forms a primer, NSP9-pU, which is utilized by the polymerase for the initiation of RNA chains. Interacts with ribosome signal recognition particle RNA (SRP). Together with NSP8, suppress protein integration into the cell membrane, thereby disrupting host immune defenses. Functionally, plays a pivotal role in viral transcription by stimulating both nsp14 3'-5' exoribonuclease and nsp16 2'-O-methyltransferase activities. Therefore plays an essential role in viral mRNAs cap methylation. In terms of biological role, RNA-directed RNA polymerase that catalyzes the transcription of viral genomic and subgenomic RNAs. Acts in complex with nsp7 and nsp8 to transcribe both the minus and positive strands of genomic RNA. The kinase-like NiRAN domain of NSP12 attaches one or more nucleotides to the amino terminus of NSP9, forming a covalent RNA-protein intermediate that serves as transcription/replication primer. Subgenomic RNAs (sgRNAs) are formed by discontinuous transcription: The polymerase has the ability to pause at transcription-regulating sequences (TRS) and jump to the leader TRS, resulting in a major deletion. This creates a series of subgenomic RNAs that are replicated, transcribed and translated. In addition, Nsp12 is a subunit of the viral RNA capping enzyme that catalyzes the RNA guanylyltransferase reaction for genomic and sub-genomic RNAs. Subsequently, the NiRAN domain transfers RNA to GDP, and forms the core cap structure GpppA-RNA. Its function is as follows. RNA-directed RNA polymerase that catalyzes the transcription of viral genomic and subgenomic RNAs. Acts in complex with nsp7 and nsp8 to transcribe both the minus and positive strands of genomic RNA. Subgenomic RNAs (sgRNAs) are formed by discontinuous transcription: The polymerase has the ability to pause at transcription-regulating sequences (TRS) and jump to the leader TRS, resulting in a major deletion. This creates a series of subgenomic RNAs that are replicated, transcribed and translated. In addition, Nsp12 is a subunit of the viral RNA capping enzyme that catalyzes the RNA guanylyltransferase reaction for genomic and sub-genomic RNAs. The kinase-like NiRAN domain of NSP12 transfers RNA to the amino terminus of NSP9, forming a covalent RNA-protein intermediate. Subsequently, the NiRAN domain transfers RNA to GDP, and forms the core cap structure GpppA-RNA. Multi-functional protein with a zinc-binding domain in N-terminus displaying RNA and DNA duplex-unwinding activities with 5' to 3' polarity. Activity of helicase is dependent on magnesium. Functionally, plays a role in viral RNA synthesis through two distinct activities. The N7-guanine methyltransferase activity plays a role in the formation of the cap structure GpppA-RNA. The proofreading exoribonuclease reduces the sensitivity of the virus to RNA mutagens during replication. This activity acts on both ssRNA and dsRNA in a 3'-5' direction. In terms of biological role, plays a role in viral transcription/replication and prevents the simultaneous activation of host cell dsRNA sensors, such as MDA5/IFIH1, OAS, and PKR. Acts by degrading the 5'-polyuridines generated during replication of the poly(A) region of viral genomic and subgenomic RNAs. Catalyzes a two-step reaction in which a 2'3'-cyclic phosphate (2'3'-cP) is first generated by 2'-O transesterification, which is then hydrolyzed to a 3'-phosphate (3'-P). If not degraded, poly(U) RNA would hybridize with poly(A) RNA tails and activate host dsRNA sensors. Its function is as follows. Methyltransferase that mediates mRNA cap 2'-O-ribose methylation to the 5'-cap structure of viral mRNAs. N7-methyl guanosine cap is a prerequisite for binding of nsp16. Therefore plays an essential role in viral mRNAs cap methylation which is essential to evade immune system. The polypeptide is Replicase polyprotein 1ab (rep) (Tylonycteris pachypus (Lesser bamboo bat)).